Reading from the N-terminus, the 932-residue chain is DNA mismatch repair protein MutS (932 aa).

The span at 1–13 (MTTDTDTDVDAGT) shows a compositional bias: acidic residues. The tract at residues 1 to 26 (MTTDTDTDVDAGTDLEPQPEGPPEKM) is disordered. 648 to 655 (GPNMSGKS) contributes to the ATP binding site. The interval 865 to 892 (NQQNQASDDDEIARSPRGADTNTDAGIN) is disordered.

It belongs to the DNA mismatch repair MutS family.

This protein is involved in the repair of mismatches in DNA. It is possible that it carries out the mismatch recognition step. This protein has a weak ATPase activity. The protein is DNA mismatch repair protein MutS of Haloquadratum walsbyi (strain DSM 16790 / HBSQ001).